The following is a 317-amino-acid chain: Aspartate carbamoyltransferase catalytic subunit (317 aa).

Carbamoyl phosphate contacts are provided by Arg-66 and Thr-67. Lys-94 is a binding site for L-aspartate. Carbamoyl phosphate contacts are provided by Arg-116, His-144, and Gln-147. The L-aspartate site is built by Arg-177 and Arg-231. Gly-272 and Pro-273 together coordinate carbamoyl phosphate.

Belongs to the aspartate/ornithine carbamoyltransferase superfamily. ATCase family. In terms of assembly, heterododecamer (2C3:3R2) of six catalytic PyrB chains organized as two trimers (C3), and six regulatory PyrI chains organized as three dimers (R2).

The catalysed reaction is carbamoyl phosphate + L-aspartate = N-carbamoyl-L-aspartate + phosphate + H(+). The protein operates within pyrimidine metabolism; UMP biosynthesis via de novo pathway; (S)-dihydroorotate from bicarbonate: step 2/3. Catalyzes the condensation of carbamoyl phosphate and aspartate to form carbamoyl aspartate and inorganic phosphate, the committed step in the de novo pyrimidine nucleotide biosynthesis pathway. The protein is Aspartate carbamoyltransferase catalytic subunit of Rhodopseudomonas palustris (strain HaA2).